The following is a 213-amino-acid chain: MKNWKTSAESILTTGPVVPVIVVKKLEHAVPMAKALVAGGVRVLEVTLRTECAVDAIRAIAKEVPEAIVGAGTVLNPQQLAEVTEAGAQFAISPGLTEPLLKAATEGTIPLIPGISTVSELMLGMDYGLKEFKFFPAEANGGVKALQAIAGPFSQVRFCPTGGISPANYRDYLALKSVLCIGGSWLVPADALEAGDYDRITKLAREAVEGAKL.

Glutamate 45 acts as the Proton acceptor in catalysis. Positions 49, 73, and 133 each coordinate pyruvate. Lysine 133 (schiff-base intermediate with substrate) is an active-site residue.

It belongs to the KHG/KDPG aldolase family. As to quaternary structure, homotrimer.

The protein resides in the cytoplasm. It carries out the reaction 2-dehydro-3-deoxy-6-phospho-D-gluconate = D-glyceraldehyde 3-phosphate + pyruvate. The catalysed reaction is (4S)-4-hydroxy-2-oxoglutarate = glyoxylate + pyruvate. The protein operates within carbohydrate acid metabolism; 2-dehydro-3-deoxy-D-gluconate degradation; D-glyceraldehyde 3-phosphate and pyruvate from 2-dehydro-3-deoxy-D-gluconate: step 2/2. It participates in carbohydrate metabolism; glyoxylate and dicarboxylate metabolism. Its function is as follows. Involved in the degradation of glucose via the Entner-Doudoroff pathway. Catalyzes the reversible, stereospecific retro-aldol cleavage of 2-keto-3-deoxy-6-phosphogluconate (KDPG) to pyruvate and D-glyceraldehyde-3-phosphate. In addition to its KDPG aldolase activity, catalyzes the reversible cleavage of 2-keto-4-hydroxyglutarate (KHG) to glyoxylate and pyruvate. The enzyme is stereoselective for the S-enantiomer of KHG. Cleavage of KHG could serve in tricarboxylic acid (TCA) cycle regulation or, when operating in the reverse direction, in the detoxification of glyoxylate. This chain is KHG/KDPG aldolase (eda), found in Escherichia coli O157:H7.